A 958-amino-acid chain; its full sequence is Transcription factor PfmaH (958 aa).

A DNA-binding region (zn(2)-C6 fungal-type) is located at residues Cys44–Cys70. Residues Glu272–Ser301 are disordered. A compositionally biased stretch (low complexity) spans Ser287 to Ser301.

It localises to the nucleus. In terms of biological role, transcription factor; part of the gene cluster that mediates the biosynthesis of dihydroxynaphthalene (DHN)-melanin, a bluish-green pigment forming a dark layer in the conidial wall that protects the conidia from UV radiations. The 2 transcription factors present in the cluster, PfmaF and PfmaH, coordinately regulate DHN-melanin production. PfmaH acts as a pathway specific regulator to mediate the expression of Pfma cluster genes including PfmaJ, leading to DHN-melanin production in conidia, and regulates the conidial formation. This Pestalotiopsis fici (strain W106-1 / CGMCC3.15140) protein is Transcription factor PfmaH (PfmaH).